Here is a 141-residue protein sequence, read N- to C-terminus: Large ribosomal subunit protein uL16 (141 aa).

This sequence belongs to the universal ribosomal protein uL16 family. Part of the 50S ribosomal subunit.

Its function is as follows. Binds 23S rRNA and is also seen to make contacts with the A and possibly P site tRNAs. This chain is Large ribosomal subunit protein uL16, found in Microchaete diplosiphon (Fremyella diplosiphon).